Reading from the N-terminus, the 158-residue chain is Scytalone dehydratase-like protein CPUR_05428 (158 aa).

2 residues coordinate substrate: Tyr24 and Tyr44. Residues His79 and His104 contribute to the active site.

It belongs to the scytalone dehydratase family.

The protein operates within pigment biosynthesis. Scytalone dehydratase-like protein; part of the ergochrome gene cluster responsible for the typical purple-black color of the ergot sclerotia. The ergochrome gene cluster produces several ergot pigments including the yellow ergochrome secalonic acid and its derivatives, as well as the red anthraquinones endocrocin and clavorubin. The pathway begins with the synthesis of atrochrysone thioester by the polyketide synthase (PKS) CPUR_05437. The atrochrysone carboxyl ACP thioesterase CPUR_05436 then breaks the thioester bond and releases the atrochrysone carboxylic acid from CPUR_05437. The atrochrysone carboxylic acid is then converted to atrochrysone which is further transformed into emodin anthrone. The next step is performed by the anthrone oxygenase CPUR_05434 that catalyzes the oxidation of emodinanthrone to emodin. Emodin is further modified to yield monodictyphenone via several steps involving CPUR_05427, CPUR_05428, CPUR_05429 and CPUR_05430. The short chain dehydrogenase/reductase CPUR_05418 then catalyzes the C-5 ketoreduction to give the xanthone skeleton of the monomeric units. Ergochromes formation requires further dimerization steps of different xanthone units, probably catalyzed by the cytochrome P450 monooxygenase CPUR_05419. CPUR_05425, CPUR_05426 and CPUR_05431 are unique to Claviceps, thus it is likely that they are involved in further modification of xanthone units or in their dimerization. The yellow ergochromes and the red anthraquinone pigments endocrocin and clavorubin are products from the same PKS derived precursors and the latter are likely shunt products in the pathway of xanthone biosynthesis. It is proposed that atrochrysone carboxylic acid released from the PKS CPUR_05437 can also be converted to endocrocin anthrone which is further oxidized into endocrocin by CPUR_05435. Endocrocin could be then modified to clavorubin, possibly by CPUR_05423 and CPUR_05431. Clavorubin is the principal anthraquinone metabolite produced by the cluster with a much higher yield compared to endocrocin. In Claviceps purpurea (strain 20.1) (Ergot fungus), this protein is Scytalone dehydratase-like protein CPUR_05428.